We begin with the raw amino-acid sequence, 319 residues long: Acetyl esterase (319 aa).

Positions 91–93 (HGG) match the Involved in the stabilization of the negatively charged intermediate by the formation of the oxyanion hole motif. Residues Ser-165, Asp-262, and His-292 contribute to the active site.

It belongs to the 'GDXG' lipolytic enzyme family. In terms of assembly, homodimer. Interacts with MalT and MelA.

The protein localises to the cytoplasm. Functionally, displays esterase activity towards short chain fatty esters (acyl chain length of up to 8 carbons). Able to hydrolyze triacetylglycerol (triacetin) and tributyrylglycerol (tributyrin), but not trioleylglycerol (triolein) or cholesterol oleate. Negatively regulates MalT activity by antagonizing maltotriose binding. Inhibits MelA galactosidase activity. In Escherichia coli O45:K1 (strain S88 / ExPEC), this protein is Acetyl esterase.